The following is a 393-amino-acid chain: NAD(P)H-quinone oxidoreductase subunit H, chloroplastic (393 aa).

It belongs to the complex I 49 kDa subunit family. NDH is composed of at least 16 different subunits, 5 of which are encoded in the nucleus.

It is found in the plastid. The protein localises to the chloroplast thylakoid membrane. It carries out the reaction a plastoquinone + NADH + (n+1) H(+)(in) = a plastoquinol + NAD(+) + n H(+)(out). It catalyses the reaction a plastoquinone + NADPH + (n+1) H(+)(in) = a plastoquinol + NADP(+) + n H(+)(out). Its function is as follows. NDH shuttles electrons from NAD(P)H:plastoquinone, via FMN and iron-sulfur (Fe-S) centers, to quinones in the photosynthetic chain and possibly in a chloroplast respiratory chain. The immediate electron acceptor for the enzyme in this species is believed to be plastoquinone. Couples the redox reaction to proton translocation, and thus conserves the redox energy in a proton gradient. The polypeptide is NAD(P)H-quinone oxidoreductase subunit H, chloroplastic (Olimarabidopsis pumila (Dwarf rocket)).